The sequence spans 256 residues: Necrosis-inducing protein NPP1 (256 aa).

Residues 111–121 carry the Conserved undecapeptide motif motif; that stretch reads AIMYAWYFPKG. The Conserved heptapeptide motif signature appears at 133–139; that stretch reads GHRHEWE.

This sequence belongs to the Necrosis inducing protein (NPP1) family.

The protein resides in the secreted. Its function is as follows. Secreted effector that acts as a pathogen-associated molecular pattern (PAMP) recognized by the plant immune system. In Phytophthora cinnamomi (Cinnamon fungus), this protein is Necrosis-inducing protein NPP1.